The chain runs to 477 residues: Proline--tRNA ligase (477 aa).

Belongs to the class-II aminoacyl-tRNA synthetase family. ProS type 3 subfamily. In terms of assembly, homodimer.

It is found in the cytoplasm. The catalysed reaction is tRNA(Pro) + L-proline + ATP = L-prolyl-tRNA(Pro) + AMP + diphosphate. Functionally, catalyzes the attachment of proline to tRNA(Pro) in a two-step reaction: proline is first activated by ATP to form Pro-AMP and then transferred to the acceptor end of tRNA(Pro). This is Proline--tRNA ligase from Methanoculleus marisnigri (strain ATCC 35101 / DSM 1498 / JR1).